The following is a 1247-amino-acid chain: Catenin delta-2 (1247 aa).

Disordered stretches follow at residues methionine 1–alanine 50, serine 134–histidine 238, and leucine 256–serine 309. Serine 7 is modified (phosphoserine). The span at proline 22–alanine 50 shows a compositional bias: polar residues. Residues serine 49–lysine 84 adopt a coiled-coil conformation. Over residues serine 149–serine 160 the composition is skewed to low complexity. Residues tyrosine 172 to threonine 207 are compositionally biased toward polar residues. Residue arginine 209 is modified to Omega-N-methylarginine. A compositionally biased stretch (pro residues) spans proline 218–proline 228. Residue arginine 261 is modified to Omega-N-methylarginine. 2 positions are modified to phosphoserine: serine 264 and serine 273. A compositionally biased stretch (polar residues) spans proline 265–lysine 276. Arginine 279 and arginine 293 each carry omega-N-methylarginine. The span at serine 296–serine 309 shows a compositional bias: polar residues. Phosphoserine occurs at positions 324, 357, 412, and 458. The ARM 1 repeat unit spans residues glycine 391–serine 433. A disordered region spans residues proline 429–alanine 480. Positions leucine 466–proline 475 are enriched in polar residues. Phosphoserine is present on serine 511. Residue tyrosine 513 is modified to Phosphotyrosine. The segment at serine 514–aspartate 533 is disordered. 8 ARM repeats span residues lysine 537–phenylalanine 576, asparagine 579–tyrosine 618, aspartate 623–serine 663, leucine 679–serine 721, glutamate 725–tyrosine 770, proline 832–alanine 872, valine 904–leucine 943, and methionine 997–glutamine 1040. Disordered regions lie at residues threonine 1064 to arginine 1131 and alanine 1152 to tyrosine 1176. Residues proline 1072 to isoleucine 1081 show a composition bias toward polar residues. Serine 1087 and serine 1098 each carry phosphoserine. A compositionally biased stretch (low complexity) spans serine 1087 to arginine 1100. Residues isoleucine 1103 to tyrosine 1112 are compositionally biased toward basic and acidic residues.

It belongs to the beta-catenin family. In terms of assembly, binds to E-cadherin at a juxtamembrane site within the cytoplasmic domain. Binds to PSEN1. Interacts with PDZD2. Interacts (via the extreme C-terminus) with FRMPD2 (via the PDZ 2 domain). Interacts with ZBTB33. Interacts with ARHGEF28. Interacts with CDK5. Interacts with CTNNB1. Interacts with GSK3A and GSK3B. Interacts with DNM2. Interacts with CCDC85B. Post-translationally, O-glycosylated. Phosphorylated by CDK5. Phosphorylated by GSK3B. In terms of tissue distribution, expressed in neurons and glial cells. Isoform 2 was found to be the most predominant isoform in various brain regions. Expressed at neuromuscular junctions.

The protein localises to the nucleus. The protein resides in the cell junction. It is found in the adherens junction. It localises to the cell projection. Its subcellular location is the dendrite. The protein localises to the perikaryon. In terms of biological role, has a critical role in neuronal development, particularly in the formation and/or maintenance of dendritic spines and synapses. Involved in the regulation of canonical Wnt signaling. It probably acts on beta-catenin turnover, facilitating beta-catenin interaction with GSK3B, phosphorylation, ubiquitination and degradation. May be involved in neuronal cell adhesion and tissue morphogenesis and integrity by regulating adhesion molecules. Functions as a transcriptional activator when bound to ZBTB33. This Mus musculus (Mouse) protein is Catenin delta-2 (Ctnnd2).